A 421-amino-acid polypeptide reads, in one-letter code: Gamma-glutamyl phosphate reductase (421 aa).

This sequence belongs to the gamma-glutamyl phosphate reductase family.

The protein resides in the cytoplasm. It carries out the reaction L-glutamate 5-semialdehyde + phosphate + NADP(+) = L-glutamyl 5-phosphate + NADPH + H(+). The protein operates within amino-acid biosynthesis; L-proline biosynthesis; L-glutamate 5-semialdehyde from L-glutamate: step 2/2. Functionally, catalyzes the NADPH-dependent reduction of L-glutamate 5-phosphate into L-glutamate 5-semialdehyde and phosphate. The product spontaneously undergoes cyclization to form 1-pyrroline-5-carboxylate. In Stutzerimonas stutzeri (strain A1501) (Pseudomonas stutzeri), this protein is Gamma-glutamyl phosphate reductase.